Reading from the N-terminus, the 94-residue chain is Aspartyl/glutamyl-tRNA(Asn/Gln) amidotransferase subunit C (94 aa).

The protein belongs to the GatC family. In terms of assembly, heterotrimer of A, B and C subunits.

It carries out the reaction L-glutamyl-tRNA(Gln) + L-glutamine + ATP + H2O = L-glutaminyl-tRNA(Gln) + L-glutamate + ADP + phosphate + H(+). The enzyme catalyses L-aspartyl-tRNA(Asn) + L-glutamine + ATP + H2O = L-asparaginyl-tRNA(Asn) + L-glutamate + ADP + phosphate + 2 H(+). Allows the formation of correctly charged Asn-tRNA(Asn) or Gln-tRNA(Gln) through the transamidation of misacylated Asp-tRNA(Asn) or Glu-tRNA(Gln) in organisms which lack either or both of asparaginyl-tRNA or glutaminyl-tRNA synthetases. The reaction takes place in the presence of glutamine and ATP through an activated phospho-Asp-tRNA(Asn) or phospho-Glu-tRNA(Gln). In Syntrophomonas wolfei subsp. wolfei (strain DSM 2245B / Goettingen), this protein is Aspartyl/glutamyl-tRNA(Asn/Gln) amidotransferase subunit C.